Here is a 303-residue protein sequence, read N- to C-terminus: UDP-3-O-acyl-N-acetylglucosamine deacetylase (303 aa).

H78, H237, and D241 together coordinate Zn(2+). H264 (proton donor) is an active-site residue.

The protein belongs to the LpxC family. Requires Zn(2+) as cofactor.

The enzyme catalyses a UDP-3-O-[(3R)-3-hydroxyacyl]-N-acetyl-alpha-D-glucosamine + H2O = a UDP-3-O-[(3R)-3-hydroxyacyl]-alpha-D-glucosamine + acetate. It participates in glycolipid biosynthesis; lipid IV(A) biosynthesis; lipid IV(A) from (3R)-3-hydroxytetradecanoyl-[acyl-carrier-protein] and UDP-N-acetyl-alpha-D-glucosamine: step 2/6. Catalyzes the hydrolysis of UDP-3-O-myristoyl-N-acetylglucosamine to form UDP-3-O-myristoylglucosamine and acetate, the committed step in lipid A biosynthesis. The chain is UDP-3-O-acyl-N-acetylglucosamine deacetylase from Pseudomonas putida (strain GB-1).